Reading from the N-terminus, the 301-residue chain is MVVSRSPGGYRSGIITLVGRPNVGKSTLINSLVGEHLSITSDKPQTTRRIIRGVISRMNAQIAITDTPGIHKPKTPFGKGLNEMTTCALSASDSIGICLPVNQKIGSGDRFILDKVEAIGPYKKIAIVTKIDRVEKRDLLLKLSEISDLGCNFAAVVPVSAKRAVQIDLLKDVFFENCLNFSEKLFFDHEKPSVSDQISELIREKALCLLEQEIPHSLLVEVEEILTDSNRVFIHANLYVERNSQKMIVLGKGGRTIKNISITSRLAIESFLGKKVYLRLIVKVVKNWQKSESFLGKIYLS.

The Era-type G domain maps to R11 to N180. Positions G19–S26 are G1. G19–S26 contributes to the GTP binding site. Residues Q45–R49 form a G2 region. The interval D66–G69 is G3. GTP is bound by residues D66–I70 and T129–D132. The segment at T129–D132 is G4. The interval V159–A161 is G5. The KH type-2 domain occupies L210–K286.

It belongs to the TRAFAC class TrmE-Era-EngA-EngB-Septin-like GTPase superfamily. Era GTPase family. Monomer.

The protein resides in the cytoplasm. It localises to the cell membrane. In terms of biological role, an essential GTPase that binds both GDP and GTP, with rapid nucleotide exchange. Plays a role in 16S rRNA processing and 30S ribosomal subunit biogenesis and possibly also in cell cycle regulation and energy metabolism. The protein is GTPase Era of Tropheryma whipplei (strain TW08/27) (Whipple's bacillus).